Consider the following 741-residue polypeptide: Wall-associated receptor kinase 3 (741 aa).

An N-terminal signal peptide occupies residues 1 to 23 (MKFQEGVFLVVIFFLAYTQLVKG). Over 24–342 (QHQPREDCKL…CTRPEYKRTR (319 aa)) the chain is Extracellular. Asparagine 37, asparagine 59, asparagine 78, asparagine 100, asparagine 103, asparagine 141, asparagine 192, asparagine 199, asparagine 232, asparagine 246, asparagine 261, and asparagine 266 each carry an N-linked (GlcNAc...) asparagine glycan. Positions 245–292 (GNQTCEQAGSTRICGKNSSCYNSTTRNGYICKCNEGYDGNPYRSEGCK) constitute an EGF-like 1 domain. 6 cysteine pairs are disulfide-bonded: cysteine 249/cysteine 264, cysteine 258/cysteine 275, cysteine 277/cysteine 291, cysteine 297/cysteine 310, cysteine 304/cysteine 319, and cysteine 321/cysteine 333. The 42-residue stretch at 293-334 (DIDECISDTHNCSDPKTCRNRDGGFDCKCPSGYDLNSSMSCT) folds into the EGF-like 2; calcium-binding domain. Asparagine 303 is a glycosylation site (N-linked (GlcNAc...) asparagine). Asparagine 328 is a glycosylation site (N-linked (GlcNAc...) asparagine). A helical transmembrane segment spans residues 343 to 363 (IFLVIIIGVLVLLLAAICIQH). The Cytoplasmic portion of the chain corresponds to 364–741 (ATKQRKYTKL…VAILDIETGR (378 aa)). At threonine 404 the chain carries Phosphothreonine. The 284-residue stretch at 415–698 (YDESRILGQG…RVEKTKHKWS (284 aa)) folds into the Protein kinase domain. ATP-binding positions include 421–429 (LGQGGQGTV) and lysine 443. Tyrosine 488 is modified (phosphotyrosine). Aspartate 540 (proton acceptor) is an active-site residue. 2 positions are modified to phosphothreonine: threonine 574 and threonine 579. Position 587 is a phosphotyrosine (tyrosine 587).

The protein belongs to the protein kinase superfamily. Ser/Thr protein kinase family. Predominantly expressed in green tissues such as stems and leaves.

Its subcellular location is the membrane. It carries out the reaction L-seryl-[protein] + ATP = O-phospho-L-seryl-[protein] + ADP + H(+). It catalyses the reaction L-threonyl-[protein] + ATP = O-phospho-L-threonyl-[protein] + ADP + H(+). Serine/threonine-protein kinase that may function as a signaling receptor of extracellular matrix component. Binding to pectin may have significance in the control of cell expansion, morphogenesis and development. This chain is Wall-associated receptor kinase 3 (WAK3), found in Arabidopsis thaliana (Mouse-ear cress).